We begin with the raw amino-acid sequence, 429 residues long: Arsenical pump membrane protein (429 aa).

10 helical membrane-spanning segments follow: residues 21–41 (GLGI…SGVV), 46–66 (IPVV…VIII), 98–118 (IVLL…ALIL), 121–141 (IVIA…AFVM), 178–198 (VMVP…HLFF), 228–248 (WIVL…GIPV), 249–269 (SAIA…GHAI), 274–294 (VLRG…LVVY), 316–336 (GLWA…SIMN), and 407–427 (IVMT…RLSF).

It localises to the cell inner membrane. Functionally, involved in arsenical resistance. Thought to form the channel of an arsenite pump. The polypeptide is Arsenical pump membrane protein (arsB) (Escherichia coli).